Consider the following 350-residue polypeptide: Holliday junction branch migration complex subunit RuvB (350 aa).

Residues 1-20 (MIEADRLITASPREREEQQD) are disordered. A large ATPase domain (RuvB-L) region spans residues 4-184 (ADRLITASPR…FGIVQRLEFY (181 aa)). Residues Ile23, Arg24, Gly65, Lys68, Thr69, Thr70, 131–133 (EDF), Arg174, Tyr184, and Arg221 each bind ATP. Thr69 contacts Mg(2+). The small ATPAse domain (RuvB-S) stretch occupies residues 185-255 (GIDDLATIVT…IADQALNLLD (71 aa)). Residues 258–350 (ERGFDHSDRR…SGDLFAVSDE (93 aa)) form a head domain (RuvB-H) region. Residues Arg294, Arg313, and Arg318 each contribute to the DNA site.

It belongs to the RuvB family. Homohexamer. Forms an RuvA(8)-RuvB(12)-Holliday junction (HJ) complex. HJ DNA is sandwiched between 2 RuvA tetramers; dsDNA enters through RuvA and exits via RuvB. An RuvB hexamer assembles on each DNA strand where it exits the tetramer. Each RuvB hexamer is contacted by two RuvA subunits (via domain III) on 2 adjacent RuvB subunits; this complex drives branch migration. In the full resolvosome a probable DNA-RuvA(4)-RuvB(12)-RuvC(2) complex forms which resolves the HJ.

It is found in the cytoplasm. The enzyme catalyses ATP + H2O = ADP + phosphate + H(+). The RuvA-RuvB-RuvC complex processes Holliday junction (HJ) DNA during genetic recombination and DNA repair, while the RuvA-RuvB complex plays an important role in the rescue of blocked DNA replication forks via replication fork reversal (RFR). RuvA specifically binds to HJ cruciform DNA, conferring on it an open structure. The RuvB hexamer acts as an ATP-dependent pump, pulling dsDNA into and through the RuvAB complex. RuvB forms 2 homohexamers on either side of HJ DNA bound by 1 or 2 RuvA tetramers; 4 subunits per hexamer contact DNA at a time. Coordinated motions by a converter formed by DNA-disengaged RuvB subunits stimulates ATP hydrolysis and nucleotide exchange. Immobilization of the converter enables RuvB to convert the ATP-contained energy into a lever motion, pulling 2 nucleotides of DNA out of the RuvA tetramer per ATP hydrolyzed, thus driving DNA branch migration. The RuvB motors rotate together with the DNA substrate, which together with the progressing nucleotide cycle form the mechanistic basis for DNA recombination by continuous HJ branch migration. Branch migration allows RuvC to scan DNA until it finds its consensus sequence, where it cleaves and resolves cruciform DNA. The sequence is that of Holliday junction branch migration complex subunit RuvB from Ectopseudomonas mendocina (strain ymp) (Pseudomonas mendocina).